Reading from the N-terminus, the 418-residue chain is Ceramide synthase LAC1 (418 aa).

Polar residues predominate over residues 1–14 (MSTIKPSPSNNNLK). The segment at 1–25 (MSTIKPSPSNNNLKVRSRPRRKSSI) is disordered. At serine 2 the chain carries N-acetylserine. Residues 2 to 81 (STIKPSPSNN…WFSFREISYR (80 aa)) lie on the Cytoplasmic side of the membrane. The segment covering 15-24 (VRSRPRRKSS) has biased composition (basic residues). Phosphoserine is present on residues serine 23 and serine 24. A helical membrane pass occupies residues 82–102 (HAWIAPLMILIAVYSAYFTSG). Asparagine 103 is a glycosylation site (N-linked (GlcNAc...) asparagine). Over 103–130 (NTTKTNVLHRFVAVSYQIGDTNAYGKGI) the chain is Lumenal. Residues 131–155 (NDLCFVFYYMIFFTFLREFLMDVVI) form a helical membrane-spanning segment. At 156–172 (RPFAIRLHVTSKHRIKR) the chain is on the cytoplasmic side. Residues 168–385 (HRIKRIMEQM…FRVLYRILWR (218 aa)) enclose the TLC domain. Positions 169, 172, and 182 each coordinate fumonisin B1. The chain crosses the membrane as a helical span at residues 173-194 (IMEQMYAIFYTGVSGPFGIYCM). The Lumenal segment spans residues 195–217 (YHSDLWFFNTKAMYRTYPDFTNP). Residues 218–240 (FLFKVFYLGQAAFWAQQACILVL) form a helical membrane-spanning segment. Residues tyrosine 224 and tryptophan 231 each coordinate hexacosanoate. Tryptophan 231 contacts fumonisin B1. Tryptophan 231 contributes to the hexacosanoyl-CoA binding site. Residues 241 to 249 (QLEKPRKDH) are Cytoplasmic-facing. Residues 250 to 268 (NELTFHHIVTLLLIWSSYV) form a helical membrane-spanning segment. Histidine 255 contributes to the fumonisin B1 binding site. Histidine 255, threonine 259, leucine 262, isoleucine 263, serine 265, serine 266, phenylalanine 269, phenylalanine 271, methionine 274, glycine 275, isoleucine 278, tyrosine 279, methionine 282, aspartate 283, and aspartate 286 together coordinate hexacosanoate. Residues histidine 255, threonine 259, and leucine 262 each coordinate hexacosanoyl-CoA. Hexacosanoyl-CoA is bound by residues serine 265 and serine 266. Over 269–273 (FHFTK) the chain is Lumenal. Hexacosanoyl-CoA-binding residues include phenylalanine 271, methionine 274, glycine 275, isoleucine 278, tyrosine 279, and methionine 282. The chain crosses the membrane as a helical span at residues 274-295 (MGLPIYITMDVSDFLLSFSKTL). Fumonisin B1 contacts are provided by aspartate 286, leucine 289, lysine 293, asparagine 296, tyrosine 297, alanine 303, phenylalanine 304, phenylalanine 307, and tryptophan 314. Hexacosanoyl-CoA-binding residues include aspartate 286, leucine 289, lysine 293, and asparagine 296. The Cytoplasmic segment spans residues 296-305 (NYLDSGLAFF). The chain crosses the membrane as a helical span at residues 306–334 (SFAIFVVAWIYLRHYINLKILWSVLTQFR). A hexacosanoyl-CoA-binding site is contributed by phenylalanine 307. Hexacosanoate contacts are provided by arginine 318, phenylalanine 343, tyrosine 348, isoleucine 352, serine 353, isoleucine 356, valine 357, leucine 360, isoleucine 361, and tryptophan 371. Arginine 318 provides a ligand contact to hexacosanoyl-CoA. Residues 335–353 (TEGNYVLNFATQQYKCWIS) lie on the Lumenal side of the membrane. 6 residues coordinate hexacosanoyl-CoA: tyrosine 348, isoleucine 352, serine 353, isoleucine 356, valine 357, and leucine 360. Residues 354–382 (LPIVFVLIGALQLVNLYWLFLIFRVLYRI) traverse the membrane as a helical segment. 5 residues coordinate fumonisin B1: tryptophan 371, isoleucine 375, valine 378, isoleucine 382, and arginine 385. Hexacosanoyl-CoA is bound at residue tryptophan 371. Residues 383 to 418 (LWRGILKDDRSDSESDEESDESSTTPTDSTPTKKDI) are Cytoplasmic-facing. Residues 390 to 418 (DDRSDSESDEESDESSTTPTDSTPTKKDI) form a disordered region.

The protein belongs to the sphingosine N-acyltransferase family. In terms of assembly, component of the ceramide synthase complex composed of at least LAC1, LAG1 and LIP1. Forms a heterotetrameric complex, where one unit of the LIP1 homodimer interacts with LAC1 and the other with either LAC1 or LAG1. In terms of processing, phosphorylated; phosphorylation is induced upon disruption of sphingolipid synthesis. Phosphorylation is inhibited by exogenous addition of phytosphingosine.

The protein localises to the endoplasmic reticulum membrane. The enzyme catalyses a very long-chain fatty acyl-CoA + a sphingoid base = an N-(very-long-chain fatty acyl)-sphingoid base + CoA + H(+). It catalyses the reaction hexacosanoyl-CoA + sphinganine = N-hexacosanoylsphinganine + CoA + H(+). The catalysed reaction is eicosanoyl-CoA + sphinganine = N-eicosanoylsphinganine + CoA + H(+). It carries out the reaction a fatty acyl-CoA + sphinganine = an N-acylsphinganine + CoA + H(+). The enzyme catalyses (4R)-hydroxysphinganine + a fatty acyl-CoA = an N-acyl-(4R)-4-hydroxysphinganine + CoA + H(+). It participates in lipid metabolism; sphingolipid metabolism. As part of the ceramide synthase complex, inhibited by the sphinganine analog mycotoxin, fumonisin B1 (FB1). Activated by ACB1, as part of the ceramide synthase complex. Component of the ceramide synthase complex that catalyzes the transfer of the acyl chain from acyl-CoA to a sphingoid base, with high selectivity toward hexacosanoyl-CoA (C26:0-CoA). N-acylates sphinganine and phytosphingosine bases to form dihydroceramides and phytoceramides, respectively. Redundant with LAG1. Facilitates ER-to-Golgi transport of GPI-anchored proteins. Has a lower affinity for phytosphingosine (PHS) than dihydrosphingosine (DHS); PHS is required for the synthesis of phytoceramides and the formation of nuclear envelopes. Along with LAG1, plays a role in pheromone-induced MAP kinase-activation of mating and formation of diploid cells. May also play a role, together with LAG1, in the polarized membrane distribution of phosphatidylinositol 4,5 biphosphate required for STE5 localization to the plasma membrane. The polypeptide is Ceramide synthase LAC1 (LAC1) (Saccharomyces cerevisiae (strain ATCC 204508 / S288c) (Baker's yeast)).